Here is a 173-residue protein sequence, read N- to C-terminus: Dual-action ribosomal maturation protein DarP (173 aa).

It belongs to the DarP family.

The protein localises to the cytoplasm. Member of a network of 50S ribosomal subunit biogenesis factors which assembles along the 30S-50S interface, preventing incorrect 23S rRNA structures from forming. Promotes peptidyl transferase center (PTC) maturation. The sequence is that of Dual-action ribosomal maturation protein DarP from Pseudomonas putida (strain ATCC 700007 / DSM 6899 / JCM 31910 / BCRC 17059 / LMG 24140 / F1).